A 673-amino-acid polypeptide reads, in one-letter code: Citrate exporter 1 (673 aa).

Residues 1–44 (MFNLNTKSSKEPEVTEVAVDSTPSSPVTRESSPESSPDNSAVDL) form a disordered region. The segment covering 21–39 (STPSSPVTRESSPESSPDN) has biased composition (polar residues). A helical transmembrane segment spans residues 67 to 87 (FLVFGAMAFCMLVSFMDQNGI). N-linked (GlcNAc...) asparagine glycosylation is present at Asn-99. A run of 4 helical transmembrane segments spans residues 103–123 (TISW…VLYG), 133–153 (LVFM…ACAQ), 164–184 (FSGI…SDIV), and 194–214 (GILG…GAAF). Asn-217 is a glycosylation site (N-linked (GlcNAc...) asparagine). 8 helical membrane passes run 222-242 (AIFY…FFIL), 261-281 (PGLF…AGGG), 292-312 (ISML…EGFF), 322-342 (IFGT…GIAY), 364-384 (AAGM…ISGQ), 393-413 (LEVI…KCFW), 419-439 (MALL…CFQP), and 465-485 (SFGG…SLKA). Asn-526 carries an N-linked (GlcNAc...) asparagine glycan. The chain crosses the membrane as a helical span at residues 529-549 (HTVFVFLCPIVGACLLVTVFV). Residues 564-596 (AKTVEDKDKDESGTDCEDMTKGEVLVSEKEGKL) are compositionally biased toward basic and acidic residues. Disordered stretches follow at residues 564-608 (AKTV…MHFG) and 636-673 (FPPM…IQEE). N-linked (GlcNAc...) asparagine glycosylation is found at Asn-599 and Asn-662.

This sequence belongs to the major facilitator superfamily.

Its subcellular location is the cell membrane. It catalyses the reaction citrate(in) = citrate(out). Its function is as follows. Transmembrane transporter that exports citrate across the cell membrane. The chain is Citrate exporter 1 from Yarrowia lipolytica (strain CLIB 122 / E 150) (Yeast).